The sequence spans 357 residues: MDIFKELILKHTDENVLISPVSILSTLSILNHGAAGSTAEQLSKYIENMNENTPDDKKDDNNDMDVDIPYCATLATANKIYGSDSIEFHASFLQKIKDDFQTVNFNNANQTKELINEWVKTMTNGKINSLLTSPLSINTRMIVISAVHFKAMWKYPFSKHLTYTDKFYISKNIVTSVDMMVGTENDLQYVHINELFGGFSIIDIPYEGNSSMVIILPDDIEGIYNIEKNITDEKFKKWCGMLSTKSIDLYMPKFKVEMTEPYNLVPILENLGLTNIFGYYADFSKMCNETITVEKFLHTTFIDVNEEYTEVSAVTGVFMTNFSMVYRMKVYINHPFIYMIKDNTGHTLFIGKYCYPQ.

Belongs to the serpin family. Poxviruses subfamily.

The protein resides in the host cytoplasm. In terms of biological role, plays a role in mediating viral host range. May act to inhibit a caspase independent form of apoptosis to allow efficient virus replication in infected cells. In Monkeypox virus, this protein is Serine proteinase inhibitor 1 (OPG208).